The following is a 467-amino-acid chain: MATGADVRDILELGGPEGDAASGTISKKDIINPDKKKSKKSSETLTFKRPEGMHREVYALLYSDKKDAPPLLPSDTGQGYRTVKAKLGSKKVRPWKWMPFTNPARKDGAMFFHWRRAAEEGKDYPFARFNKTVQVPVYSEQEYQLYLHDDAWTKAETDHLFDLSRRFDLRFVVIHDRYDHQQFKKRSVEDLKERYYHICAKLANVRAVPGTDLKIPVFDAGHERRRKEQLERLYNRTPEQVAEEEYLLQELRKIEARKKEREKRSQDLQKLITAADTTAEQRRTERKAPKKKLPQKKEAEKPAVPETAGIKFPDFKSAGVTLRSQRMKLPSSVGQKKIKALEQMLLELGVELSPTPTEELVHMFNELRSDLVLLYELKQACANCEYELQMLRHRHEALARAGVLGGPATPASGPGPASAEPAVTEPGLGPDPKDTIIDVVGAPLTPNSRKRRESASSSSSVKKAKKP.

Composition is skewed to basic and acidic residues over residues 1–11 (MATGADVRDIL) and 26–48 (SKKD…LTFK). A disordered region spans residues 1–48 (MATGADVRDILELGGPEGDAASGTISKKDIINPDKKKSKKSSETLTFK). A Glycyl lysine isopeptide (Lys-Gly) (interchain with G-Cter in SUMO2) cross-link involves residue lysine 27. Residues 149–199 (DDAWTKAETDHLFDLSRRFDLRFVVIHDRYDHQQFKKRSVEDLKERYYHIC) enclose the SANT domain. A Glycyl lysine isopeptide (Lys-Gly) (interchain with G-Cter in SUMO2) cross-link involves residue lysine 214. Residues 225 to 275 (RRKEQLERLYNRTPEQVAEEEYLLQELRKIEARKKEREKRSQDLQKLITAA) adopt a coiled-coil conformation. Over residues 258-267 (KKEREKRSQD) the composition is skewed to basic and acidic residues. 2 disordered regions span residues 258 to 305 (KKER…PAVP) and 404 to 467 (LGGP…AKKP). The segment covering 406 to 422 (GPATPASGPGPASAEPA) has biased composition (low complexity). Threonine 445 carries the phosphothreonine modification. Serine 448 is modified (phosphoserine).

As to quaternary structure, component of the NuA4 histone acetyltransferase complex which contains the catalytic subunit KAT5/TIP60 and the subunits EP400, TRRAP/PAF400, BRD8/SMAP, EPC1, DMAP1/DNMAP1, RUVBL1/TIP49, RUVBL2, ING3, actin, ACTL6A/BAF53A, MORF4L1/MRG15, MORF4L2/MRGX, MRGBP, YEATS4/GAS41, VPS72/YL1 and MEAF6. Component of a NuA4-related complex which contains EP400, TRRAP/PAF400, SRCAP, BRD8/SMAP, EPC1, DMAP1/DNMAP1, RUVBL1/TIP49, RUVBL2, actin, ACTL6A/BAF53A, VPS72 and YEATS4/GAS41. DMAP1 also forms a complex with DNMT1 and HDAC2. Throughout S phase it interacts directly with the N-terminus of DNMT1, which serves to recruit DMAP1 to replication foci. DMAP1 interacts with ING1, a component of the mSin3A transcription repressor complex, although this interaction is not required for recruitment of ING1 to heterochromatin. Interacts directly with the transcriptional corepressor TSG101. Interacts with the pro-apoptotic protein DAXX. Interacts with URI1.

It localises to the nucleus. It is found in the cytoplasm. Functionally, involved in transcription repression and activation. Its interaction with HDAC2 may provide a mechanism for histone deacetylation in heterochromatin following replication of DNA at late firing origins. Can also repress transcription independently of histone deacetylase activity. May specifically potentiate DAXX-mediated repression of glucocorticoid receptor-dependent transcription. Component of the NuA4 histone acetyltransferase (HAT) complex which is involved in transcriptional activation of select genes principally by acetylation of nucleosomal histones H4 and H2A. This modification may both alter nucleosome - DNA interactions and promote interaction of the modified histones with other proteins which positively regulate transcription. This complex may be required for the activation of transcriptional programs associated with oncogene and proto-oncogene mediated growth induction, tumor suppressor mediated growth arrest and replicative senescence, apoptosis, and DNA repair. NuA4 may also play a direct role in DNA repair when recruited to sites of DNA damage. Participates in the nuclear localization of URI1 and increases its transcriptional corepressor activity. This Homo sapiens (Human) protein is DNA methyltransferase 1-associated protein 1 (DMAP1).